The following is a 346-amino-acid chain: Putative F-box/kelch-repeat protein At1g27420 (346 aa).

The F-box domain maps to 9–56; it reads PIIPGLTDDVAELCVSKIPRSSFQITSQVCRRWRSFLRSQHFAAVRKL. 5 Kelch repeats span residues 62-109, 111-167, 168-215, 217-257, and 259-300; these read EFLC…VLDG, KIVF…EVNG, LLYV…AFSS, LYAV…VRNK, and YFMD…VWNN.

The chain is Putative F-box/kelch-repeat protein At1g27420 from Arabidopsis thaliana (Mouse-ear cress).